We begin with the raw amino-acid sequence, 306 residues long: D-alanine--D-alanine ligase B (306 aa).

Active-site residues include glutamate 15 and serine 150. In terms of domain architecture, ATP-grasp spans 101–303 (KLLWQGAGLP…FSQLVVRILE (203 aa)). An ATP-binding site is contributed by 134 to 189 (ISALGLPVIVKPSREGSSVGMSKVVAENALQDALRLAFQHDEEVLIEKWLSGPEFT). Mg(2+) is bound by residues aspartate 257, glutamate 270, and asparagine 272. Serine 281 is a catalytic residue.

It belongs to the D-alanine--D-alanine ligase family. In terms of assembly, monomer. Mg(2+) serves as cofactor. Requires Mn(2+) as cofactor.

The protein localises to the cytoplasm. The enzyme catalyses 2 D-alanine + ATP = D-alanyl-D-alanine + ADP + phosphate + H(+). Its pathway is cell wall biogenesis; peptidoglycan biosynthesis. In terms of biological role, cell wall formation. In Escherichia coli (strain K12), this protein is D-alanine--D-alanine ligase B (ddlB).